Here is a 314-residue protein sequence, read N- to C-terminus: Homoserine kinase (314 aa).

96 to 106 (PIGSGLGSSAC) provides a ligand contact to ATP.

This sequence belongs to the GHMP kinase family. Homoserine kinase subfamily.

The protein localises to the cytoplasm. It carries out the reaction L-homoserine + ATP = O-phospho-L-homoserine + ADP + H(+). It functions in the pathway amino-acid biosynthesis; L-threonine biosynthesis; L-threonine from L-aspartate: step 4/5. Catalyzes the ATP-dependent phosphorylation of L-homoserine to L-homoserine phosphate. The polypeptide is Homoserine kinase (Haemophilus influenzae (strain 86-028NP)).